Here is a 235-residue protein sequence, read N- to C-terminus: Small ribosomal subunit protein uS3 (235 aa).

The region spanning 39–107 is the KH type-2 domain; the sequence is VRSYVKKKLI…PAQVNISEIR (69 aa).

Belongs to the universal ribosomal protein uS3 family. As to quaternary structure, part of the 30S ribosomal subunit. Forms a tight complex with proteins S10 and S14.

In terms of biological role, binds the lower part of the 30S subunit head. Binds mRNA in the 70S ribosome, positioning it for translation. This Buchnera aphidicola subsp. Cinara cedri (strain Cc) protein is Small ribosomal subunit protein uS3.